Reading from the N-terminus, the 198-residue chain is Cyclin-dependent kinase inhibitor 1B (198 aa).

The span at 1 to 12 shows a compositional bias: polar residues; that stretch reads MSNVRVSNGSPT. A disordered region spans residues 1-30; that stretch reads MSNVRVSNGSPTSERRDAKQAEYPKPSACR. Ser-10 carries the post-translational modification Phosphoserine; by UHMK1. Residues 13–22 are compositionally biased toward basic and acidic residues; it reads SERRDAKQAE. The tract at residues 51 to 91 is interaction with CDK2; it reads DMEEASQNKWNFDFQNHKPLEGKYEWQEVEKGSLPEFYYRP. Tyr-74 is subject to Phosphotyrosine; by SRC. Residues 87-198 form a disordered region; sequence FYYRPPRPPK…KKPGLRRRQT (112 aa). Tyr-88 carries the phosphotyrosine; by ABL, LYN and SRC modification. Residue Tyr-89 is modified to Phosphotyrosine. Residues 104–113 show a composition bias toward polar residues; sequence QESQDVSGTR. Residues 126-137 show a composition bias toward basic and acidic residues; the sequence is EDTHLVDQKTDA. A Nuclear localization signal motif is present at residues 153–169; sequence KRPATDDSSPQNKRANR. A Phosphothreonine; by CaMK1, PKB/AKT1 and PIM1 modification is found at Thr-157. Thr-170 bears the Phosphothreonine mark. Residues 175 to 186 show a composition bias toward polar residues; it reads SDGSPNAGSVEQ. Thr-187 carries the phosphothreonine; by PKB/AKT1, CDK1 and CDK2 modification. Thr-198 carries the phosphothreonine; by CaMK1, PKB/AKT1, RPS6KA1, RPS6KA3 and PIM1 modification.

It belongs to the CDI family. Forms a ternary complex composed of CCNE1, CDK2 and CDKN1B. Interacts directly with CCNE1; the interaction is inhibited by CDK2-dependent phosphorylation on Thr-187. Interacts with COPS5, subunit of the COP9 signalosome complex; the interaction leads to CDKN1B degradation. Interacts with NUP50; the interaction leads to nuclear import and degradation of phosphorylated CDKN1B. Interacts with CCND1 and SNX6. Interacts (Thr-198-phosphorylated form) with 14-3-3 proteins, binds strongly YWHAQ, weakly YWHAE and YWHAH, but not YWHAB nor YWHAZ; the interaction with YWHAQ results in translocation to the cytoplasm. Interacts with AKT1 and LYN; the interactions lead to cytoplasmic mislocation, phosphorylation of CDKN1B and inhibition of cell cycle arrest. Forms a ternary complex with CCNA2 and CDK2; CDKN1B inhibits the kinase activity of CDK2 through conformational rearrangements. Interacts (unphosphorylated form) with CDK2. Forms a complex with CDK2 and SPDYA, but does not directly interact with SPDYA. Forms a ternary complex composed of cyclin D, CDK4 and CDKN1B. Interacts (phosphorylated on Tyr-88 and Tyr-89) with CDK4; the interaction is required for cyclin D and CDK4 complex assembly, induces nuclear translocation and activates the CDK4 kinase activity. Interacts with GRB2. Interacts with PIM1. Identified in a complex with SKP1, SKP2 and CKS1B. Interacts with UHMK1; the interaction leads to cytoplasmic mislocation, phosphorylation of CDKN1B and inhibition of cell cycle arrest. Also interacts with CDK1. Dephosphorylated on Thr-187 by PPM1H, leading to CDKN1B stability. Post-translationally, phosphorylated; phosphorylation occurs on serine, threonine and tyrosine residues. Phosphorylation on Ser-10 is the major site of phosphorylation in resting cells, takes place at the G(0)-G(1) phase and leads to protein stability. Phosphorylation on other sites is greatly enhanced by mitogens, growth factors, cMYC and in certain cancer cell lines. The phosphorylated form found in the cytoplasm is inactivate. Phosphorylation on Thr-198 is required for interaction with 14-3-3 proteins. Phosphorylation on Thr-187, by CDK1 and CDK2 leads to protein ubiquitination and proteasomal degradation. Tyrosine phosphorylation promotes this process. Phosphorylation by PKB/AKT1 can be suppressed by LY294002, an inhibitor of the catalytic subunit of PI3K. Phosphorylation on Tyr-88 and Tyr-89 has no effect on binding CDK2, but is required for binding CDK4. Dephosphorylated on tyrosine residues by G-CSF. Dephosphorylated on Thr-187 by PPM1H, leading to CDKN1B stability. Ubiquitinated; in the cytoplasm by the KPC complex (composed of RNF123/KPC1 and UBAC1/KPC2) and, in the nucleus, by SCF(SKP2). The latter requires prior phosphorylation on Thr-187. Ubiquitinated; by a TRIM21-containing SCF(SKP2)-like complex; leads to its degradation. In terms of processing, subject to degradation in the lysosome. Interaction with SNX6 promotes lysosomal degradation.

It is found in the nucleus. It localises to the cytoplasm. Its subcellular location is the endosome. Its function is as follows. Important regulator of cell cycle progression. Inhibits the kinase activity of CDK2 bound to cyclin A, but has little inhibitory activity on CDK2 bound to SPDYA. Involved in G1 arrest. Potent inhibitor of cyclin E- and cyclin A-CDK2 complexes. Forms a complex with cyclin type D-CDK4 complexes and is involved in the assembly, stability, and modulation of CCND1-CDK4 complex activation. Acts either as an inhibitor or an activator of cyclin type D-CDK4 complexes depending on its phosphorylation state and/or stoichometry. The chain is Cyclin-dependent kinase inhibitor 1B (CDKN1B) from Canis lupus familiaris (Dog).